The primary structure comprises 225 residues: Pyridoxine/pyridoxamine 5'-phosphate oxidase (225 aa).

Residues 9-12 (RVDY) and lysine 78 contribute to the substrate site. FMN contacts are provided by residues 73–78 (RTVLCK), 88–89 (YT), lysine 95, and glutamine 117. Residues tyrosine 135, arginine 139, and serine 143 each contribute to the substrate site. Residues 152–153 (QS) and tryptophan 198 each bind FMN. 204-206 (RLH) provides a ligand contact to substrate. An FMN-binding site is contributed by arginine 208.

This sequence belongs to the pyridoxamine 5'-phosphate oxidase family. Homodimer. FMN is required as a cofactor.

The enzyme catalyses pyridoxamine 5'-phosphate + O2 + H2O = pyridoxal 5'-phosphate + H2O2 + NH4(+). It carries out the reaction pyridoxine 5'-phosphate + O2 = pyridoxal 5'-phosphate + H2O2. Its pathway is cofactor metabolism; pyridoxal 5'-phosphate salvage; pyridoxal 5'-phosphate from pyridoxamine 5'-phosphate: step 1/1. It participates in cofactor metabolism; pyridoxal 5'-phosphate salvage; pyridoxal 5'-phosphate from pyridoxine 5'-phosphate: step 1/1. Catalyzes the oxidation of either pyridoxine 5'-phosphate (PNP) or pyridoxamine 5'-phosphate (PMP) into pyridoxal 5'-phosphate (PLP). In Nocardia farcinica (strain IFM 10152), this protein is Pyridoxine/pyridoxamine 5'-phosphate oxidase.